We begin with the raw amino-acid sequence, 170 residues long: Inosine/xanthosine triphosphatase (170 aa).

This sequence belongs to the YjjX NTPase family. Homodimer. Mg(2+) serves as cofactor. Requires Mn(2+) as cofactor.

The catalysed reaction is XTP + H2O = XDP + phosphate + H(+). The enzyme catalyses ITP + H2O = IDP + phosphate + H(+). In terms of biological role, phosphatase that hydrolyzes non-canonical purine nucleotides such as XTP and ITP to their respective diphosphate derivatives. Probably excludes non-canonical purines from DNA/RNA precursor pool, thus preventing their incorporation into DNA/RNA and avoiding chromosomal lesions. The sequence is that of Inosine/xanthosine triphosphatase from Aliivibrio fischeri (strain ATCC 700601 / ES114) (Vibrio fischeri).